We begin with the raw amino-acid sequence, 358 residues long: Neutral protease 2 homolog MEP8 (358 aa).

The N-terminal stretch at 1 to 19 (MKLSSILLALAALVSPAFS) is a signal peptide. Residues 20–179 (YAISHLPRSE…EKAIKPVDKR (160 aa)) constitute a propeptide that is removed on maturation. Intrachain disulfides connect Cys186/Cys256 and Cys263/Cys281. A Zn(2+)-binding site is contributed by His305. Residue Glu306 is part of the active site. Zn(2+)-binding residues include His309 and Asp320.

This sequence belongs to the peptidase M35 family. Requires Zn(2+) as cofactor.

It is found in the secreted. It carries out the reaction Preferential cleavage of bonds with hydrophobic residues in P1'. Also 3-Asn-|-Gln-4 and 8-Gly-|-Ser-9 bonds in insulin B chain.. In terms of biological role, secreted metalloproteinase that allows assimilation of proteinaceous substrates. Shows high activities on basic nuclear substrates such as histone and protamine. May be involved in virulence. The protein is Neutral protease 2 homolog MEP8 (MEP8) of Coccidioides posadasii (strain C735) (Valley fever fungus).